We begin with the raw amino-acid sequence, 363 residues long: Pyrimidine monooxygenase RutA (363 aa).

FMN contacts are provided by residues 49–50 (IK), Asn115, Glu124, 140–141 (RY), and Ser190.

It belongs to the NtaA/SnaA/DszA monooxygenase family. RutA subfamily.

The enzyme catalyses uracil + FMNH2 + NADH + O2 = (Z)-3-ureidoacrylate + FMN + NAD(+) + H2O + H(+). It carries out the reaction thymine + FMNH2 + NADH + O2 = (Z)-2-methylureidoacrylate + FMN + NAD(+) + H2O + H(+). Catalyzes the pyrimidine ring opening between N-3 and C-4 by an unusual flavin hydroperoxide-catalyzed mechanism, adding oxygen atoms in the process to yield ureidoacrylate peracid, that immediately reacts with FMN forming ureidoacrylate and FMN-N(5)-oxide. The FMN-N(5)-oxide reacts spontaneously with NADH to produce FMN. Requires the flavin reductase RutF to regenerate FMN in vivo. The chain is Pyrimidine monooxygenase RutA from Escherichia coli O157:H7 (strain EC4115 / EHEC).